Reading from the N-terminus, the 510-residue chain is MGSPEEQSVPGDDFNEESTDPNKNLSLVSGPADSNEGEIRLPSPKGSNLPLVSQQDTSEAPSVVLWTGGCWPDSLVSEEERLGSPEDEKMDGLDFLSQPSVETEQQVANPETPGAKEQPSSESFCAETETGSNRRAPQASGSEEAKAASAATFLPKGLEQSRAWVSPRKSTTSRMLISENVHHPPSEPELSEELNEVQMMRVTICLKDGNHGNQAKNSGPAETGDLARHSNVQTRESFMRMPSSLLTTTRGLTSGMERQTSKELEPFSSKKKQGILWGKGGSKSNYAEAAAGVGALPKAGPRKKMTQKKKPLWDASAVTLGKAFHQWGQRLKSAPAEPATFPPISGVGLPGRSNKCSLLPLRPKQCKNFYTGKRSGAKRTKELQLVAKEDTDSTRDPGSQVQFPTCRAEPPCQSVHQEFSSGDINTRSLQDPGNSQSSGLSQRGILSKKSTPSGDQEEPVGPPAPDSEILQLHGTQGCPRCPELQKEIEDLRKQLSALQAVGEKFQTHST.

Disordered regions lie at residues 1 to 154 (MGSP…ATFL), 208 to 227 (DGNHGNQAKNSGPAETGDLA), 234 to 276 (TRES…QGIL), and 368 to 480 (NFYT…GCPR). At serine 43 the chain carries Phosphoserine. A compositionally biased stretch (polar residues) spans 50–60 (PLVSQQDTSEA). The segment covering 78-92 (EEERLGSPEDEKMDG) has biased composition (basic and acidic residues). Serine 84 is modified (phosphoserine). Composition is skewed to polar residues over residues 97–109 (SQPSVETEQQVAN) and 118–135 (QPSSESFCAETETGSNRR). Serine 120 carries the post-translational modification Phosphoserine. Positions 139-151 (ASGSEEAKAASAA) are enriched in low complexity. Over residues 243–255 (SSLLTTTRGLTSG) the composition is skewed to low complexity. Positions 379-395 (RTKELQLVAKEDTDSTR) are enriched in basic and acidic residues. The span at 414 to 441 (SVHQEFSSGDINTRSLQDPGNSQSSGLS) shows a compositional bias: polar residues.

This is an uncharacterized protein from Rattus norvegicus (Rat).